Reading from the N-terminus, the 260-residue chain is Ribosome maturation factor RimP (260 aa).

Composition is skewed to basic and acidic residues over residues 189 to 199 and 215 to 227; these read RRGRDAEREQL and AREMRDKAGPRKE. A disordered region spans residues 189-260; that stretch reads RRGRDAEREQ…QTTSDPHQGE (72 aa). Residues 228 to 242 show a composition bias toward basic residues; sequence KTAKKPLPKNTKAHR.

This sequence belongs to the RimP family.

It is found in the cytoplasm. In terms of biological role, required for maturation of 30S ribosomal subunits. This chain is Ribosome maturation factor RimP, found in Afipia carboxidovorans (strain ATCC 49405 / DSM 1227 / KCTC 32145 / OM5) (Oligotropha carboxidovorans).